A 168-amino-acid chain; its full sequence is Crossover junction endodeoxyribonuclease RuvC (168 aa).

Active-site residues include D7, E66, and D138. Mg(2+)-binding residues include D7, E66, and D138.

It belongs to the RuvC family. In terms of assembly, homodimer which binds Holliday junction (HJ) DNA. The HJ becomes 2-fold symmetrical on binding to RuvC with unstacked arms; it has a different conformation from HJ DNA in complex with RuvA. In the full resolvosome a probable DNA-RuvA(4)-RuvB(12)-RuvC(2) complex forms which resolves the HJ. The cofactor is Mg(2+).

It is found in the cytoplasm. It carries out the reaction Endonucleolytic cleavage at a junction such as a reciprocal single-stranded crossover between two homologous DNA duplexes (Holliday junction).. The RuvA-RuvB-RuvC complex processes Holliday junction (HJ) DNA during genetic recombination and DNA repair. Endonuclease that resolves HJ intermediates. Cleaves cruciform DNA by making single-stranded nicks across the HJ at symmetrical positions within the homologous arms, yielding a 5'-phosphate and a 3'-hydroxyl group; requires a central core of homology in the junction. The consensus cleavage sequence is 5'-(A/T)TT(C/G)-3'. Cleavage occurs on the 3'-side of the TT dinucleotide at the point of strand exchange. HJ branch migration catalyzed by RuvA-RuvB allows RuvC to scan DNA until it finds its consensus sequence, where it cleaves and resolves the cruciform DNA. This Cereibacter sphaeroides (strain ATCC 17023 / DSM 158 / JCM 6121 / CCUG 31486 / LMG 2827 / NBRC 12203 / NCIMB 8253 / ATH 2.4.1.) (Rhodobacter sphaeroides) protein is Crossover junction endodeoxyribonuclease RuvC.